Here is a 227-residue protein sequence, read N- to C-terminus: Cytochrome c oxidase subunit 2 (227 aa).

The Mitochondrial intermembrane segment spans residues 1–14 (MAHAAQVGLQDATS). The helical transmembrane segment at 15–45 (PIMEELITFHDHALMIIFLICFLVLYALFLT) threads the bilayer. The Mitochondrial matrix portion of the chain corresponds to 46 to 59 (LTTKLTSTNISDAQ). Residues 60–87 (EMETIWTILPAIILVLIALPSLRILYMT) traverse the membrane as a helical segment. Residues 88-227 (DEINDPSFTI…IFEMGPVFAL (140 aa)) are Mitochondrial intermembrane-facing. Positions 161, 196, 198, 200, 204, and 207 each coordinate Cu cation. A Mg(2+)-binding site is contributed by Glu198.

It belongs to the cytochrome c oxidase subunit 2 family. Component of the cytochrome c oxidase (complex IV, CIV), a multisubunit enzyme composed of 14 subunits. The complex is composed of a catalytic core of 3 subunits MT-CO1, MT-CO2 and MT-CO3, encoded in the mitochondrial DNA, and 11 supernumerary subunits COX4I, COX5A, COX5B, COX6A, COX6B, COX6C, COX7A, COX7B, COX7C, COX8 and NDUFA4, which are encoded in the nuclear genome. The complex exists as a monomer or a dimer and forms supercomplexes (SCs) in the inner mitochondrial membrane with NADH-ubiquinone oxidoreductase (complex I, CI) and ubiquinol-cytochrome c oxidoreductase (cytochrome b-c1 complex, complex III, CIII), resulting in different assemblies (supercomplex SCI(1)III(2)IV(1) and megacomplex MCI(2)III(2)IV(2)). Found in a complex with TMEM177, COA6, COX18, COX20, SCO1 and SCO2. Interacts with TMEM177 in a COX20-dependent manner. Interacts with COX20. Interacts with COX16. The cofactor is Cu cation.

The protein resides in the mitochondrion inner membrane. The catalysed reaction is 4 Fe(II)-[cytochrome c] + O2 + 8 H(+)(in) = 4 Fe(III)-[cytochrome c] + 2 H2O + 4 H(+)(out). Component of the cytochrome c oxidase, the last enzyme in the mitochondrial electron transport chain which drives oxidative phosphorylation. The respiratory chain contains 3 multisubunit complexes succinate dehydrogenase (complex II, CII), ubiquinol-cytochrome c oxidoreductase (cytochrome b-c1 complex, complex III, CIII) and cytochrome c oxidase (complex IV, CIV), that cooperate to transfer electrons derived from NADH and succinate to molecular oxygen, creating an electrochemical gradient over the inner membrane that drives transmembrane transport and the ATP synthase. Cytochrome c oxidase is the component of the respiratory chain that catalyzes the reduction of oxygen to water. Electrons originating from reduced cytochrome c in the intermembrane space (IMS) are transferred via the dinuclear copper A center (CU(A)) of subunit 2 and heme A of subunit 1 to the active site in subunit 1, a binuclear center (BNC) formed by heme A3 and copper B (CU(B)). The BNC reduces molecular oxygen to 2 water molecules using 4 electrons from cytochrome c in the IMS and 4 protons from the mitochondrial matrix. This chain is Cytochrome c oxidase subunit 2 (MT-CO2), found in Gorilla gorilla gorilla (Western lowland gorilla).